A 274-amino-acid polypeptide reads, in one-letter code: Mitochondrial outer membrane protein porin 1 (274 aa).

It belongs to the eukaryotic mitochondrial porin (TC 1.B.8.1) family. In terms of tissue distribution, expressed in shoots and roots. Also expressed in callus, leaves, panicles, sheaths and stems.

The protein localises to the mitochondrion outer membrane. Forms a channel through the mitochondrial outer membrane that allows diffusion of small hydrophilic molecules. The channel adopts an open conformation at low or zero membrane potential and a closed conformation at potentials above 30-40 mV. The open state has a weak anion selectivity whereas the closed state is cation-selective. The sequence is that of Mitochondrial outer membrane protein porin 1 (VDAC1) from Oryza sativa subsp. japonica (Rice).